We begin with the raw amino-acid sequence, 267 residues long: Small ribosomal subunit protein uS2 (267 aa).

The disordered stretch occupies residues Gly222 to Glu267. Basic and acidic residues predominate over residues Lys223–Asp240. Residues Glu241–Glu267 show a composition bias toward acidic residues.

It belongs to the universal ribosomal protein uS2 family.

This Campylobacter hominis (strain ATCC BAA-381 / DSM 21671 / CCUG 45161 / LMG 19568 / NCTC 13146 / CH001A) protein is Small ribosomal subunit protein uS2.